The sequence spans 90 residues: Barrier-to-autointegration factor-like protein (90 aa).

Homodimer. Heterodimerizes with BANF1.

Its subcellular location is the nucleus. It is found in the cytoplasm. Its function is as follows. May play a role in BANF1 regulation and influence tissue-specific roles of BANF1. This chain is Barrier-to-autointegration factor-like protein (Banf2), found in Mus musculus (Mouse).